Here is a 525-residue protein sequence, read N- to C-terminus: GMP synthase [glutamine-hydrolyzing] (525 aa).

Positions 9–207 (RVLILDFGSQ…VLEIAGCEPL (199 aa)) constitute a Glutamine amidotransferase type-1 domain. Cys-86 acts as the Nucleophile in catalysis. Residues His-181 and Glu-183 contribute to the active site. Residues 208–400 (WTPANIVEDA…LGLPYDMVYR (193 aa)) enclose the GMPS ATP-PPase domain. 235-241 (SGGVDSS) is an ATP binding site.

In terms of assembly, homodimer.

It carries out the reaction XMP + L-glutamine + ATP + H2O = GMP + L-glutamate + AMP + diphosphate + 2 H(+). It functions in the pathway purine metabolism; GMP biosynthesis; GMP from XMP (L-Gln route): step 1/1. In terms of biological role, catalyzes the synthesis of GMP from XMP. This is GMP synthase [glutamine-hydrolyzing] from Teredinibacter turnerae (strain ATCC 39867 / T7901).